The primary structure comprises 788 residues: ATP-dependent 6-phosphofructokinase, platelet type (788 aa).

Met-1 carries the N-acetylmethionine modification. The tract at residues 1 to 399 (MSDQDSSTSS…NLNTYKRLAI (399 aa)) is N-terminal catalytic PFK domain 1. A phosphoserine mark is found at Ser-2, Ser-6, Ser-12, and Ser-21. ATP is bound by residues Gly-34, 97 to 98 (RC), and 127 to 130 (GDGS). Asp-128 lines the Mg(2+) pocket. A Phosphoserine modification is found at Ser-142. Substrate contacts are provided by residues 173–175 (SID), Arg-210, 217–219 (MGR), Glu-273, Arg-301, and 307–310 (HVQR). Asp-175 functions as the Proton acceptor in the catalytic mechanism. Ser-386 is modified (phosphoserine). Position 395 is an N6-acetyllysine (Lys-395). The interdomain linker stretch occupies residues 400–411 (KEPDDKIPKSNC). The tract at residues 412–788 (NVAIINVGAP…VHNHGELSAI (377 aa)) is C-terminal regulatory PFK domain 2. Arg-481 serves as a coordination point for beta-D-fructose 2,6-bisphosphate. N6-acetyllysine is present on Lys-486. Residues 538–542 (TVSNN), Arg-576, 583–585 (MGG), and Glu-639 each bind beta-D-fructose 2,6-bisphosphate. Ser-540 is a glycosylation site (O-linked (GlcNAc) serine). A Phosphotyrosine modification is found at Tyr-651. Beta-D-fructose 2,6-bisphosphate contacts are provided by residues Arg-665 and 671–674 (HMQQ). The residue at position 688 (Lys-688) is an N6-acetyllysine. Position 744 (Arg-744) interacts with beta-D-fructose 2,6-bisphosphate.

This sequence belongs to the phosphofructokinase type A (PFKA) family. ATP-dependent PFK group I subfamily. Eukaryotic two domain clade 'E' sub-subfamily. In terms of assembly, homo- and heterotetramers. Phosphofructokinase (PFK) enzyme functions as a tetramer composed of different combinations of 3 types of subunits, called PFKM (M), PFKL (L) and PFKP (P). The composition of the PFK tetramer differs according to the tissue type it is present in. The kinetic and regulatory properties of the tetrameric enzyme are dependent on the subunit composition, hence can vary across tissues. Interacts with ATG4B; promoting phosphorylation of ATG4B. Mg(2+) is required as a cofactor. In terms of processing, glcNAcylation decreases enzyme activity. Post-translationally, phosphorylation at Ser-386 promotes interaction with ATG4B. As to expression, expressed at high level in neuroendocrine tissues.

Its subcellular location is the cytoplasm. It catalyses the reaction beta-D-fructose 6-phosphate + ATP = beta-D-fructose 1,6-bisphosphate + ADP + H(+). The protein operates within carbohydrate degradation; glycolysis; D-glyceraldehyde 3-phosphate and glycerone phosphate from D-glucose: step 3/4. With respect to regulation, allosterically activated by ADP, AMP, or fructose 2,6-bisphosphate, and allosterically inhibited by ATP or citrate. Its function is as follows. Catalyzes the phosphorylation of D-fructose 6-phosphate to fructose 1,6-bisphosphate by ATP, the first committing step of glycolysis. This chain is ATP-dependent 6-phosphofructokinase, platelet type (Pfkp), found in Rattus norvegicus (Rat).